We begin with the raw amino-acid sequence, 95 residues long: Small ribosomal subunit protein uS15 (95 aa).

The protein belongs to the universal ribosomal protein uS15 family. As to quaternary structure, part of the 30S ribosomal subunit. Forms a bridge to the 50S subunit in the 70S ribosome, contacting the 23S rRNA.

Functionally, one of the primary rRNA binding proteins, it binds directly to 16S rRNA where it helps nucleate assembly of the platform of the 30S subunit by binding and bridging several RNA helices of the 16S rRNA. In terms of biological role, forms an intersubunit bridge (bridge B4) with the 23S rRNA of the 50S subunit in the ribosome. The protein is Small ribosomal subunit protein uS15 of Sulfurihydrogenibium sp. (strain YO3AOP1).